The sequence spans 256 residues: Pimeloyl-[acyl-carrier protein] methyl ester esterase (256 aa).

Residues 15-242 (HLVLLHGWGL…AAHAPFISHP (228 aa)) enclose the AB hydrolase-1 domain. Residues tryptophan 22, 82–83 (SL), and 143–147 (FLALQ) contribute to the substrate site. The active-site Nucleophile is serine 82. Catalysis depends on residues aspartate 207 and histidine 235. Histidine 235 provides a ligand contact to substrate.

It belongs to the AB hydrolase superfamily. Carboxylesterase BioH family. Monomer.

The protein resides in the cytoplasm. It catalyses the reaction 6-carboxyhexanoyl-[ACP] methyl ester + H2O = 6-carboxyhexanoyl-[ACP] + methanol + H(+). The protein operates within cofactor biosynthesis; biotin biosynthesis. Its function is as follows. The physiological role of BioH is to remove the methyl group introduced by BioC when the pimeloyl moiety is complete. It allows to synthesize pimeloyl-ACP via the fatty acid synthetic pathway through the hydrolysis of the ester bonds of pimeloyl-ACP esters. The protein is Pimeloyl-[acyl-carrier protein] methyl ester esterase of Salmonella choleraesuis (strain SC-B67).